Consider the following 342-residue polypeptide: Anthranilate phosphoribosyltransferase (342 aa).

Residues G79, 82 to 83 (GD), T87, 89 to 92 (NIST), 107 to 115 (KHCNQRISS), and S119 contribute to the 5-phospho-alpha-D-ribose 1-diphosphate site. G79 contacts anthranilate. Mg(2+) is bound at residue S91. N110 serves as a coordination point for anthranilate. Residue R165 participates in anthranilate binding. Residues D223 and E224 each coordinate Mg(2+).

The protein belongs to the anthranilate phosphoribosyltransferase family. As to quaternary structure, homodimer. The cofactor is Mg(2+).

It carries out the reaction N-(5-phospho-beta-D-ribosyl)anthranilate + diphosphate = 5-phospho-alpha-D-ribose 1-diphosphate + anthranilate. Its pathway is amino-acid biosynthesis; L-tryptophan biosynthesis; L-tryptophan from chorismate: step 2/5. Its function is as follows. Catalyzes the transfer of the phosphoribosyl group of 5-phosphorylribose-1-pyrophosphate (PRPP) to anthranilate to yield N-(5'-phosphoribosyl)-anthranilate (PRA). In Buchnera aphidicola subsp. Acyrthosiphon pisum (strain 5A), this protein is Anthranilate phosphoribosyltransferase.